A 530-amino-acid polypeptide reads, in one-letter code: Light-independent protochlorophyllide reductase subunit B (530 aa).

[4Fe-4S] cluster is bound at residue Asp-36. Asp-290 functions as the Proton donor in the catalytic mechanism. Gly-425–Leu-426 lines the substrate pocket.

This sequence belongs to the ChlB/BchB/BchZ family. Protochlorophyllide reductase is composed of three subunits; ChlL, ChlN and ChlB. Forms a heterotetramer of two ChlB and two ChlN subunits. [4Fe-4S] cluster serves as cofactor.

The catalysed reaction is chlorophyllide a + oxidized 2[4Fe-4S]-[ferredoxin] + 2 ADP + 2 phosphate = protochlorophyllide a + reduced 2[4Fe-4S]-[ferredoxin] + 2 ATP + 2 H2O. The protein operates within porphyrin-containing compound metabolism; chlorophyll biosynthesis (light-independent). Its function is as follows. Component of the dark-operative protochlorophyllide reductase (DPOR) that uses Mg-ATP and reduced ferredoxin to reduce ring D of protochlorophyllide (Pchlide) to form chlorophyllide a (Chlide). This reaction is light-independent. The NB-protein (ChlN-ChlB) is the catalytic component of the complex. This is Light-independent protochlorophyllide reductase subunit B from Synechococcus sp. (strain WH7803).